Reading from the N-terminus, the 142-residue chain is Large ribosomal subunit protein uL13 (142 aa).

This sequence belongs to the universal ribosomal protein uL13 family. As to quaternary structure, part of the 50S ribosomal subunit.

Its function is as follows. This protein is one of the early assembly proteins of the 50S ribosomal subunit, although it is not seen to bind rRNA by itself. It is important during the early stages of 50S assembly. This is Large ribosomal subunit protein uL13 from Lachnospira eligens (strain ATCC 27750 / DSM 3376 / VPI C15-48 / C15-B4) (Eubacterium eligens).